The primary structure comprises 460 residues: UDP-N-acetylmuramoylalanine--D-glutamate ligase (460 aa).

An ATP-binding site is contributed by 120-126 (GSNGKTT).

It belongs to the MurCDEF family.

It is found in the cytoplasm. It carries out the reaction UDP-N-acetyl-alpha-D-muramoyl-L-alanine + D-glutamate + ATP = UDP-N-acetyl-alpha-D-muramoyl-L-alanyl-D-glutamate + ADP + phosphate + H(+). It functions in the pathway cell wall biogenesis; peptidoglycan biosynthesis. Cell wall formation. Catalyzes the addition of glutamate to the nucleotide precursor UDP-N-acetylmuramoyl-L-alanine (UMA). The protein is UDP-N-acetylmuramoylalanine--D-glutamate ligase of Lactobacillus johnsonii (strain CNCM I-12250 / La1 / NCC 533).